We begin with the raw amino-acid sequence, 183 residues long: Protein CT_584 (183 aa).

This sequence belongs to the chlamydial CPn_0803/CT_584/TC_0873 family.

This Chlamydia trachomatis serovar D (strain ATCC VR-885 / DSM 19411 / UW-3/Cx) protein is Protein CT_584.